A 469-amino-acid polypeptide reads, in one-letter code: Argininosuccinate lyase (469 aa).

It belongs to the lyase 1 family. Argininosuccinate lyase subfamily.

It localises to the cytoplasm. The enzyme catalyses 2-(N(omega)-L-arginino)succinate = fumarate + L-arginine. Its pathway is amino-acid biosynthesis; L-arginine biosynthesis; L-arginine from L-ornithine and carbamoyl phosphate: step 3/3. This is Argininosuccinate lyase from Saccharophagus degradans (strain 2-40 / ATCC 43961 / DSM 17024).